Here is a 380-residue protein sequence, read N- to C-terminus: Cytochrome b (380 aa).

4 helical membrane-spanning segments follow: residues 34 to 54 (FGSLLGLCLVSQILTGLFLAM), 78 to 99 (WLLRNLHANGASFMFICLYMHI), 114 to 134 (WNIGVMLLVLTMATAFLGYVL), and 179 to 199 (FFAFHFFLPFMIAGLSVVHLL). Heme b contacts are provided by His-84 and His-98. Positions 183 and 197 each coordinate heme b. Position 202 (His-202) interacts with a ubiquinone. 4 helical membrane-spanning segments follow: residues 227-247 (YKDVVGFVVLLAGLVFIALFS), 289-309 (LGGVVALAMSIVVLFFMPFVH), 321-341 (LAQVLFWLMVVNVLLLTWLGG), and 348-368 (YIFLGQAASVIYFVNILLFIP).

It belongs to the cytochrome b family. As to quaternary structure, the cytochrome bc1 complex contains 3 respiratory subunits (MT-CYB, CYC1 and UQCRFS1), 2 core proteins (UQCRC1 and UQCRC2) and probably 6 low-molecular weight proteins. It depends on heme b as a cofactor.

The protein resides in the mitochondrion inner membrane. In terms of biological role, component of the ubiquinol-cytochrome c reductase complex (complex III or cytochrome b-c1 complex) that is part of the mitochondrial respiratory chain. The b-c1 complex mediates electron transfer from ubiquinol to cytochrome c. Contributes to the generation of a proton gradient across the mitochondrial membrane that is then used for ATP synthesis. The chain is Cytochrome b (MT-CYB) from Branchiostoma lanceolatum (Common lancelet).